The chain runs to 762 residues: MSVAETEEGVFEATATIDNGSFGTRTIRFETGRLAQQAAGSVVGYLDDENMLLSATTASKNPKEHFNFFPLTVDVEERMYAAGRIPGSFFRREGRPSTDAILTCRLIDRPLRPSFVNGLRNEIQVVVTILSLDPNDLYDVVAINAASASTQLAGLPFSGPVGGVRVALIDGQWVAFPNVEQLERAVFDMVVAGRIVGTEEDGTPDVAIMMVEAEATDKVIELVEGGAPAPTESVVAQGLEAAKPFIAALCTAQQELADASGATVKTGAEYPVFPEYGDDVYYAVSSVATDGLAAALTIGGKAERNQRTEEIKAEVLERLADTYEGREKEIGAAFRSLTKKLVRQRIVTDHFRIDGRGVTDIRALSAEVALVPRAHGSALFERGETQILGVTTLDMVKMAQQIDSLGPETTKRYMHHYNFPPFSTGETGRVGSPKRREIGHGALAERALMPVLPSVEEFPYAIRQVSEALGSNGSTSMGSVCASTLALLNAGVPLKAPVAGIAMGLVSDDVEVDGKTERRFVTLTDILGAEDAFGDMDFKVAGTKDFVTALQLDTKLDGIPSQVLAGALAQAKDARLTILEVMAEAIDTPDEMSPYAPRVTTIKVPVDKIGEVIGPKGKVINSITEETRAQISIEDDGTVFVGATDGPSAQAAIDKINAIANPQLPTVGERFLGTVVKTTDFGAFVALLPGRDGLVHISKLGKGKRIAKVEDVVNVGDKLRVEIADIDKRGKISLVLVAEDDDSAAAAAADSPAPADAATASS.

Mg(2+) contacts are provided by D531 and D537. The region spanning P597 to I656 is the KH domain. An S1 motif domain is found at G668 to V737.

This sequence belongs to the polyribonucleotide nucleotidyltransferase family. Mg(2+) is required as a cofactor.

It localises to the cytoplasm. It carries out the reaction RNA(n+1) + phosphate = RNA(n) + a ribonucleoside 5'-diphosphate. Its function is as follows. Involved in mRNA degradation. Catalyzes the phosphorolysis of single-stranded polyribonucleotides processively in the 3'- to 5'-direction. The sequence is that of Polyribonucleotide nucleotidyltransferase from Mycobacterium ulcerans (strain Agy99).